Here is a 1824-residue protein sequence, read N- to C-terminus: Treslin (1824 aa).

Disordered stretches follow at residues 542–572, 590–622, 907–973, 1001–1035, 1098–1117, 1189–1221, 1293–1388, 1459–1518, 1617–1650, and 1803–1824; these read EFYQSSTAGSSGSLRSKKRGTQCTPVRQKMK, AQKTQGDSGSAGSGKGTEKGGKKSSGDRTKPGL, SPSK…SGES, RHSSVFYSSSQPRSRNLDRVVSSSQLSHSEGKGKF, AVGCRTPQSPRTPNRTVGDN, VPENQVNVPDSPVFAKRHSPRLVTPGKNSSPEE, PFCN…DDDK, FEGK…QSSP, TPTHHPTSSQSPLASPLTPSPQSRGWPTPENLNS, and PLCQPRRRRTPSRTYSRKKLLD. The span at 546-555 shows a compositional bias: low complexity; sequence SSTAGSSGSL. Over residues 562–572 the composition is skewed to polar residues; that stretch reads TQCTPVRQKMK. The span at 605–619 shows a compositional bias: basic and acidic residues; sequence GTEKGGKKSSGDRTK. The segment covering 907 to 921 has biased composition (polar residues); the sequence is SPSKKSKMPRSQSVS. Basic and acidic residues predominate over residues 932-952; the sequence is SDVDNDDRHTLLTKKVSETPL. 2 stretches are compositionally biased toward polar residues: residues 1005 to 1014 and 1103 to 1114; these read VFYSSSQPRS and TPQSPRTPNRTV. Residues 1319-1345 are compositionally biased toward polar residues; it reads RSGNTPVKESCSPSSNSQGITGTSPSP. Residues 1347–1370 are compositionally biased toward low complexity; sequence KSLSSAVAKSSPSPSFGPSRSGVG. The span at 1462-1472 shows a compositional bias: polar residues; sequence KQTTSTGTPLT. The span at 1480–1490 shows a compositional bias: basic and acidic residues; it reads TPDRRQREAEA. 2 stretches are compositionally biased toward polar residues: residues 1617–1629 and 1636–1650; these read TPTHHPTSSQSPL and SPQSRGWPTPENLNS. Over residues 1807-1824 the composition is skewed to basic residues; the sequence is PRRRRTPSRTYSRKKLLD.

The protein belongs to the treslin family. As to quaternary structure, interacts with topbp1 (via BRCT domains); interaction takes place in a cdk2-dependent manner. Component of the replisome complex.

It is found in the nucleus. Functionally, regulator of DNA replication and S/M and G2/M checkpoints. Regulates the triggering of DNA replication initiation via its interaction with topbp1 by participating in cdk2-mediated loading of cdc45l onto replication origins. Required for the transition from pre-replication complex (pre-RC) to pre-initiation complex (pre-IC). Required to prevent mitotic entry after treatment with ionizing radiation. This chain is Treslin (ticrr), found in Danio rerio (Zebrafish).